We begin with the raw amino-acid sequence, 140 residues long: ATP synthase epsilon chain (140 aa).

The protein belongs to the ATPase epsilon chain family. As to quaternary structure, F-type ATPases have 2 components, CF(1) - the catalytic core - and CF(0) - the membrane proton channel. CF(1) has five subunits: alpha(3), beta(3), gamma(1), delta(1), epsilon(1). CF(0) has three main subunits: a, b and c.

It localises to the cell inner membrane. Functionally, produces ATP from ADP in the presence of a proton gradient across the membrane. The sequence is that of ATP synthase epsilon chain from Nitrosococcus oceani (strain ATCC 19707 / BCRC 17464 / JCM 30415 / NCIMB 11848 / C-107).